We begin with the raw amino-acid sequence, 60 residues long: MGNIRTTFVKRTAKELLELHGDKFNSDFENNKQVVAEYSTVSTKHLRNQIAGYATHLLEQ.

The protein belongs to the eukaryotic ribosomal protein eS17 family.

The protein is Small ribosomal subunit protein eS17 of Methanosphaera stadtmanae (strain ATCC 43021 / DSM 3091 / JCM 11832 / MCB-3).